We begin with the raw amino-acid sequence, 61 residues long: Metallothionein-1A (61 aa).

At M1 the chain carries N-acetylmethionine. A beta region spans residues 1-29 (MDPNCSCATGGSCTCTGSCKCKECKCTSC). A divalent metal cation-binding residues include C5, C7, C13, C15, C19, C21, C24, C26, C29, C33, C34, C36, C37, C41, C44, C48, C50, and C57. Residues 30–61 (KKSCCSCCPMSCAKCAQGCICKGASEKCSCCA) form an alpha region. S58 is subject to Phosphoserine. Positions 59 and 60 each coordinate a divalent metal cation.

Belongs to the metallothionein superfamily. Type 1 family. In terms of assembly, monomer.

In terms of biological role, metallothioneins have a high content of cysteine residues that bind various heavy metals; these proteins are transcriptionally regulated by both heavy metals and glucocorticoids. This chain is Metallothionein-1A (MT1A), found in Homo sapiens (Human).